The sequence spans 562 residues: Urocanate hydratase (562 aa).

NAD(+) is bound by residues 52-53 (GG), Gln130, 176-178 (GMG), Glu196, Arg201, 242-243 (NA), 263-267 (QTSAH), 273-274 (YL), and Tyr322. The active site involves Cys410. An NAD(+)-binding site is contributed by Gly492.

The protein belongs to the urocanase family. The cofactor is NAD(+).

The protein resides in the cytoplasm. The catalysed reaction is 4-imidazolone-5-propanoate = trans-urocanate + H2O. It functions in the pathway amino-acid degradation; L-histidine degradation into L-glutamate; N-formimidoyl-L-glutamate from L-histidine: step 2/3. Its function is as follows. Catalyzes the conversion of urocanate to 4-imidazolone-5-propionate. The protein is Urocanate hydratase of Shewanella pealeana (strain ATCC 700345 / ANG-SQ1).